Reading from the N-terminus, the 287-residue chain is Lipoyl synthase (287 aa).

[4Fe-4S] cluster-binding residues include Cys34, Cys39, Cys45, Cys60, Cys64, Cys67, and Ser273. One can recognise a Radical SAM core domain in the interval 46 to 262; sequence WNKRHATVMI…KYIAYSKGFL (217 aa).

It belongs to the radical SAM superfamily. Lipoyl synthase family. [4Fe-4S] cluster serves as cofactor.

The protein localises to the cytoplasm. The enzyme catalyses [[Fe-S] cluster scaffold protein carrying a second [4Fe-4S](2+) cluster] + N(6)-octanoyl-L-lysyl-[protein] + 2 oxidized [2Fe-2S]-[ferredoxin] + 2 S-adenosyl-L-methionine + 4 H(+) = [[Fe-S] cluster scaffold protein] + N(6)-[(R)-dihydrolipoyl]-L-lysyl-[protein] + 4 Fe(3+) + 2 hydrogen sulfide + 2 5'-deoxyadenosine + 2 L-methionine + 2 reduced [2Fe-2S]-[ferredoxin]. It participates in protein modification; protein lipoylation via endogenous pathway; protein N(6)-(lipoyl)lysine from octanoyl-[acyl-carrier-protein]: step 2/2. Functionally, catalyzes the radical-mediated insertion of two sulfur atoms into the C-6 and C-8 positions of the octanoyl moiety bound to the lipoyl domains of lipoate-dependent enzymes, thereby converting the octanoylated domains into lipoylated derivatives. This Wolbachia pipientis wMel protein is Lipoyl synthase.